The chain runs to 130 residues: Holo-[acyl-carrier-protein] synthase (130 aa).

Residues Asp-9 and Glu-58 each coordinate Mg(2+).

Belongs to the P-Pant transferase superfamily. AcpS family. Requires Mg(2+) as cofactor.

It localises to the cytoplasm. It catalyses the reaction apo-[ACP] + CoA = holo-[ACP] + adenosine 3',5'-bisphosphate + H(+). Functionally, transfers the 4'-phosphopantetheine moiety from coenzyme A to a Ser of acyl-carrier-protein. In Mycolicibacterium paratuberculosis (strain ATCC BAA-968 / K-10) (Mycobacterium paratuberculosis), this protein is Holo-[acyl-carrier-protein] synthase.